The following is a 445-amino-acid chain: UPF0210 protein SPH_0352 (445 aa).

It belongs to the UPF0210 family. As to quaternary structure, homodimer.

The protein is UPF0210 protein SPH_0352 of Streptococcus pneumoniae (strain Hungary19A-6).